Consider the following 1164-residue polypeptide: Phospholipid-transporting ATPase IA (1164 aa).

The Cytoplasmic portion of the chain corresponds to 1-75 (MPTMRRTVSE…PRFLYSQFRR (75 aa)). At Ser25 the chain carries Phosphoserine. A Phosphothreonine modification is found at Thr28. Ser29 carries the post-translational modification Phosphoserine. A helical transmembrane segment spans residues 76 to 96 (AANSFFLFIALLQQIPDVSPT). The Exoplasmic loop segment spans residues 97 to 100 (GRYT). Residues 101 to 121 (TLVPLLFILAVAAIKEIIEDI) form a helical membrane-spanning segment. Topologically, residues 122–297 (KRHKADNAVN…SNVERITNVQ (176 aa)) are cytoplasmic. A helical membrane pass occupies residues 298–318 (ILILFCILIAMSLVCSVGSAI). Over 319 to 339 (WNRRHSGKDWYLHLHYGGASN) the chain is Exoplasmic loop. A helical transmembrane segment spans residues 340 to 360 (FGLNFLTFIILFNNLIPISLL). Over 361 to 866 (VTLEVVKFTQ…KCILYCFYKN (506 aa)) the chain is Cytoplasmic. Asp409 serves as the catalytic 4-aspartylphosphate intermediate. Positions 409, 410, and 411 each coordinate ATP. Asp409 contributes to the Mg(2+) binding site. Thr411 is a Mg(2+) binding site. The residue at position 443 (Ser443) is a Phosphoserine. ATP is bound by residues Glu508, Phe549, Lys572, Arg605, Thr685, Gly686, Asp687, 741–748 (ALIIDGKT), Arg775, and Lys781. Asp801 is a Mg(2+) binding site. ATP-binding residues include Asn804 and Asp805. Asp805 is a Mg(2+) binding site. A helical membrane pass occupies residues 867-887 (IVLYIIEIWFAFVNGFSGQIL). Residues 888–890 (FER) are Exoplasmic loop-facing. A helical membrane pass occupies residues 891 to 911 (WCIGLYNVMFTAMPPLTLGIF). Over 912–939 (ERSCRKENMLKYPELYKTSQNALDFNTK) the chain is Cytoplasmic. A helical membrane pass occupies residues 940 to 960 (VFWVHCLNGLFHSVILFWFPL). The Exoplasmic loop segment spans residues 961 to 977 (KALQYGTVFGNGKTSDY). Residues 978–998 (LLLGNFVYTFVVITVCLKAGL) traverse the membrane as a helical segment. Residues 999 to 1008 (ETSYWTWFSH) are Cytoplasmic-facing. The helical transmembrane segment at 1009–1029 (IAIWGSIALWVVFFGIYSSLW) threads the bilayer. Over 1030 to 1044 (PAVPMAPDMSGEAAM) the chain is Exoplasmic loop. A helical transmembrane segment spans residues 1045 to 1065 (LFSSGVFWVGLLSIPVASLLL). Over 1066–1164 (DVLYKVIKRT…DTTKQRPDEW (99 aa)) the chain is Cytoplasmic. 1095 to 1102 (GAVVLGKS) lines the ATP pocket. Ser1126 carries the post-translational modification Phosphoserine.

The protein belongs to the cation transport ATPase (P-type) (TC 3.A.3) family. Type IV subfamily. As to quaternary structure, component of a P4-ATPase flippase complex which consists of a catalytic alpha subunit and an accessory beta subunit. Interacts with TMEM30A to form a flippase complex; this complex forms an intermediate phosphoenzyme. Interacts with TMEM30B; this interaction is reported conflictingly. It depends on Mg(2+) as a cofactor. Cleaved by calpain in a caspase- and calcium influx-dependent manner only during platelet apoptosis and may lead to inactivation. Found in most tissues except liver and testis. Most abundant in brain and lung. Also detected in fetal tissues. Isoform 1 is expressed in brain. Isoform 2 and isoform 3 are expressed in reticulocytes. Expressed in mouse hippocampus in both dentate gyrus (DG) and the CA3 regions. Expressed in both neuronal as well as non-neuronal cells within the DG. Highly expressed in platelets.

The protein localises to the cytoplasmic vesicle. It is found in the secretory vesicle. Its subcellular location is the chromaffin granule membrane. It localises to the cytoplasmic granule. The protein resides in the cell membrane. The protein localises to the endoplasmic reticulum. It is found in the golgi apparatus. Its subcellular location is the endomembrane system. It carries out the reaction ATP + H2O + phospholipidSide 1 = ADP + phosphate + phospholipidSide 2.. The enzyme catalyses a 1,2-diacyl-sn-glycero-3-phospho-L-serine(out) + ATP + H2O = a 1,2-diacyl-sn-glycero-3-phospho-L-serine(in) + ADP + phosphate + H(+). Its activity is regulated as follows. ATPase activity is stimulated by phosphatidylserine (PS) and minimally by phosphatidylethanolamine (PE). ATPase activity is inhibited by the vanadate and by the presence of calcium. Catalytic component of a P4-ATPase flippase complex which catalyzes the hydrolysis of ATP coupled to the transport of aminophospholipids from the outer to the inner leaflet of various membranes and ensures the maintenance of asymmetric distribution of phospholipids. Phospholipid translocation also seems to be implicated in vesicle formation and in uptake of lipid signaling molecules. In vitro, its ATPase activity is selectively and stereospecifically stimulated by phosphatidylserine (PS). The flippase complex ATP8A1:TMEM30A seems to play a role in regulation of cell migration probably involving flippase-mediated translocation of phosphatidylethanolamine (PE) at the cell membrane. Acts as aminophospholipid translocase at the cell membrane in neuronal cells; the activity is associated with hippocampus-dependent learning. May play a role in brain connectivity. In Mus musculus (Mouse), this protein is Phospholipid-transporting ATPase IA.